Consider the following 100-residue polypeptide: Protein MEN-8 (100 aa).

Residues 1–33 (MANNMKSATFCKATWAIFLVALAILVQLKGSEA) form the signal peptide. 4 cysteine pairs are disulfide-bonded: Cys38/Cys76, Cys48/Cys65, Cys66/Cys91, and Cys78/Cys98.

Belongs to the A9/FIL1 family.

It is found in the secreted. The sequence is that of Protein MEN-8 (MEN-8) from Silene latifolia (White campion).